We begin with the raw amino-acid sequence, 454 residues long: tRNA modification GTPase MnmE (454 aa).

Arg-23, Glu-80, and Lys-120 together coordinate (6S)-5-formyl-5,6,7,8-tetrahydrofolate. The TrmE-type G domain occupies 216–377 (GMKVVIAGRP…LRNHLKQSMG (162 aa)). Asn-226 is a K(+) binding site. GTP contacts are provided by residues 226-231 (NAGKSS), 245-251 (TDIAGTT), 270-273 (DTAG), and 335-338 (NKAD). Ser-230 is a binding site for Mg(2+). Positions 245, 247, and 250 each coordinate K(+). Thr-251 contributes to the Mg(2+) binding site. Lys-454 lines the (6S)-5-formyl-5,6,7,8-tetrahydrofolate pocket.

Belongs to the TRAFAC class TrmE-Era-EngA-EngB-Septin-like GTPase superfamily. TrmE GTPase family. Homodimer. Heterotetramer of two MnmE and two MnmG subunits. The cofactor is K(+).

The protein localises to the cytoplasm. Its function is as follows. Exhibits a very high intrinsic GTPase hydrolysis rate. Involved in the addition of a carboxymethylaminomethyl (cmnm) group at the wobble position (U34) of certain tRNAs, forming tRNA-cmnm(5)s(2)U34. The chain is tRNA modification GTPase MnmE from Escherichia coli O157:H7.